Consider the following 234-residue polypeptide: Purine nucleoside phosphorylase DeoD-type (234 aa).

Residue H5 participates in a purine D-ribonucleoside binding. Phosphate is bound by residues G21, R25, R44, and R88–S91. Residues E180–E182 and S204–D205 each bind a purine D-ribonucleoside. D205 (proton donor) is an active-site residue.

The protein belongs to the PNP/UDP phosphorylase family. Homohexamer; trimer of homodimers.

The catalysed reaction is a purine D-ribonucleoside + phosphate = a purine nucleobase + alpha-D-ribose 1-phosphate. The enzyme catalyses a purine 2'-deoxy-D-ribonucleoside + phosphate = a purine nucleobase + 2-deoxy-alpha-D-ribose 1-phosphate. Functionally, catalyzes the reversible phosphorolytic breakdown of the N-glycosidic bond in the beta-(deoxy)ribonucleoside molecules, with the formation of the corresponding free purine bases and pentose-1-phosphate. The polypeptide is Purine nucleoside phosphorylase DeoD-type (Colwellia psychrerythraea (strain 34H / ATCC BAA-681) (Vibrio psychroerythus)).